A 563-amino-acid polypeptide reads, in one-letter code: UvrABC system protein C (563 aa).

Residues 12 to 87 (NKSGVYIFKK…IYKYKPKYNA (76 aa)) enclose the GIY-YIG domain. The UVR domain occupies 194 to 229 (SNVISFIKLKMEQHARLLDFENAAKYRDILLNFNKV).

Belongs to the UvrC family. In terms of assembly, interacts with UvrB in an incision complex.

The protein resides in the cytoplasm. Its function is as follows. The UvrABC repair system catalyzes the recognition and processing of DNA lesions. UvrC both incises the 5' and 3' sides of the lesion. The N-terminal half is responsible for the 3' incision and the C-terminal half is responsible for the 5' incision. The protein is UvrABC system protein C of Fervidobacterium nodosum (strain ATCC 35602 / DSM 5306 / Rt17-B1).